The following is a 92-amino-acid chain: Small ribosomal subunit protein uS19 (92 aa).

The protein belongs to the universal ribosomal protein uS19 family.

Its function is as follows. Protein S19 forms a complex with S13 that binds strongly to the 16S ribosomal RNA. The chain is Small ribosomal subunit protein uS19 from Photobacterium profundum (strain SS9).